The primary structure comprises 395 residues: Protein phosphatase PP2A regulatory subunit A (395 aa).

8 HEAT repeats span residues 44-81 (DCLA…AVGP), 83-120 (STKT…ILSP), 122-159 (LAIQ…VLGK), 161-198 (ATIE…VIGI), 200-237 (LLSQ…QLGV), 239-276 (FFDD…EEFG), 279-316 (WAMQ…VLGS), and 318-355 (ITST…IVDE).

It belongs to the phosphatase 2A regulatory subunit A family. PP2A exists in several trimeric forms, all of which consist of a core composed of a catalytic subunit associated with a 65 kDa regulatory subunit (PR65) (subunit A). The core complex associates with a third, variable subunit (subunit B), which confers distinct properties to the holoenzyme.

Functionally, the PR65 subunit of protein phosphatase 2A serves as a scaffolding molecule to coordinate the assembly of the catalytic subunit and a variable regulatory B subunit. In Pisum sativum (Garden pea), this protein is Protein phosphatase PP2A regulatory subunit A.